The chain runs to 377 residues: Early estrogen-induced gene 1 protein (377 aa).

One can recognise a C2 NT-type domain in the interval 2 to 145 (AFLTKKKKFK…ILKVNIGMSL (144 aa)). Composition is skewed to polar residues over residues 160 to 173 (KTVS…SLQM), 188 to 198 (VRQNRSRQAML), and 222 to 234 (SRNS…QSKI). The segment at 160-313 (KTVSPPGQDS…SVESQPTWVD (154 aa)) is disordered. Low complexity predominate over residues 256–269 (TSTSSSVSGGLSLT). Basic and acidic residues predominate over residues 274–285 (EPERDVKPEKPP).

This sequence belongs to the EEIG family.

The protein localises to the nucleus. Its subcellular location is the cytoplasm. Functionally, may be involved in osteoclast differentiation. The polypeptide is Early estrogen-induced gene 1 protein (eeig1) (Xenopus laevis (African clawed frog)).